The chain runs to 734 residues: Photosystem I P700 chlorophyll a apoprotein A2 (734 aa).

Transmembrane regions (helical) follow at residues 46–69 (IFAS…FHVA), 135–158 (LYVG…LHLQ), 175–199 (LNHH…HVAI), 273–291 (MAHH…GHMY), 330–353 (LHFQ…QHMY), 369–395 (ASLY…IFFV), 417–439 (AIIS…LYVH), and 517–535 (FLVH…LILV). 2 residues coordinate [4Fe-4S] cluster: C559 and C568. The next 2 membrane-spanning stretches (helical) occupy residues 575-596 (AFYL…YFHW) and 643-665 (LSVW…MFLI). 3 residues coordinate chlorophyll a: H654, M662, and Y670. A phylloquinone-binding site is contributed by W671. Residues 707-727 (LVGLTHFSVGYVLTYAAFLIA) traverse the membrane as a helical segment.

Belongs to the PsaA/PsaB family. As to quaternary structure, the PsaA/B heterodimer binds the P700 chlorophyll special pair and subsequent electron acceptors. PSI consists of a core antenna complex that captures photons, and an electron transfer chain that converts photonic excitation into a charge separation. The eukaryotic PSI reaction center is composed of at least 11 subunits. The cofactor is P700 is a chlorophyll a/chlorophyll a' dimer, A0 is one or more chlorophyll a, A1 is one or both phylloquinones and FX is a shared 4Fe-4S iron-sulfur center..

The protein resides in the plastid. Its subcellular location is the chloroplast thylakoid membrane. It catalyses the reaction reduced [plastocyanin] + hnu + oxidized [2Fe-2S]-[ferredoxin] = oxidized [plastocyanin] + reduced [2Fe-2S]-[ferredoxin]. In terms of biological role, psaA and PsaB bind P700, the primary electron donor of photosystem I (PSI), as well as the electron acceptors A0, A1 and FX. PSI is a plastocyanin/cytochrome c6-ferredoxin oxidoreductase, converting photonic excitation into a charge separation, which transfers an electron from the donor P700 chlorophyll pair to the spectroscopically characterized acceptors A0, A1, FX, FA and FB in turn. Oxidized P700 is reduced on the lumenal side of the thylakoid membrane by plastocyanin or cytochrome c6. The chain is Photosystem I P700 chlorophyll a apoprotein A2 from Chlorella vulgaris (Green alga).